A 271-amino-acid chain; its full sequence is Glutamate racemase 3 (271 aa).

Residues 15–16 (DS) and 47–48 (YG) each bind substrate. The Proton donor/acceptor role is filled by Cys-78. 79 to 80 (NT) contributes to the substrate binding site. Catalysis depends on Cys-185, which acts as the Proton donor/acceptor. Residue 186–187 (TH) coordinates substrate.

The protein belongs to the aspartate/glutamate racemases family.

The enzyme catalyses L-glutamate = D-glutamate. It functions in the pathway cell wall biogenesis; peptidoglycan biosynthesis. Functionally, provides the (R)-glutamate required for cell wall biosynthesis. The protein is Glutamate racemase 3 of Caldanaerobacter subterraneus subsp. tengcongensis (strain DSM 15242 / JCM 11007 / NBRC 100824 / MB4) (Thermoanaerobacter tengcongensis).